Here is a 264-residue protein sequence, read N- to C-terminus: Mitochondrial distribution and morphology protein 12 (264 aa).

An SMP-LTD domain is found at 1–232 (MSFDINWNKI…WPSWINLDFN (232 aa)). The segment at 240-264 (ESSSSAEESLPHRDDAQDFSADARA) is disordered. Residues 248 to 264 (SLPHRDDAQDFSADARA) show a composition bias toward basic and acidic residues.

The protein belongs to the MDM12 family. As to quaternary structure, component of the ER-mitochondria encounter structure (ERMES) or MDM complex, composed of MMM1, MDM10, MDM12 and MDM34. An MMM1 homodimer associates with one molecule of MDM12 on each side in a pairwise head-to-tail manner, and the SMP-LTD domains of MMM1 and MDM12 generate a continuous hydrophobic tunnel for phospholipid trafficking.

The protein localises to the mitochondrion outer membrane. The protein resides in the endoplasmic reticulum membrane. In terms of biological role, component of the ERMES/MDM complex, which serves as a molecular tether to connect the endoplasmic reticulum (ER) and mitochondria. Components of this complex are involved in the control of mitochondrial shape and protein biogenesis, and function in nonvesicular lipid trafficking between the ER and mitochondria. MDM12 is required for the interaction of the ER-resident membrane protein MMM1 and the outer mitochondrial membrane-resident beta-barrel protein MDM10. The MDM12-MMM1 subcomplex functions in the major beta-barrel assembly pathway that is responsible for biogenesis of all mitochondrial outer membrane beta-barrel proteins, and acts in a late step after the SAM complex. The MDM10-MDM12-MMM1 subcomplex further acts in the TOM40-specific pathway after the action of the MDM12-MMM1 complex. Essential for establishing and maintaining the structure of mitochondria and maintenance of mtDNA nucleoids. This is Mitochondrial distribution and morphology protein 12 from Eremothecium gossypii (strain ATCC 10895 / CBS 109.51 / FGSC 9923 / NRRL Y-1056) (Yeast).